The sequence spans 452 residues: Bifunctional protein GlmU (452 aa).

Residues 1-218 (MKVLILAAGL…IVEVSGVNDR (218 aa)) are pyrophosphorylase. Residues 6-9 (LAAG), Lys-20, Gln-68, 73-74 (GT), 95-97 (YGD), Gly-134, Glu-147, Asn-162, and Asn-216 contribute to the UDP-N-acetyl-alpha-D-glucosamine site. Mg(2+) is bound at residue Asp-97. Asn-216 lines the Mg(2+) pocket. The interval 219–239 (IQLAQLETIAKQRILEKLMLS) is linker. The N-acetyltransferase stretch occupies residues 240 to 452 (GVTIVDPNST…EELKNADHKE (213 aa)). The UDP-N-acetyl-alpha-D-glucosamine site is built by Arg-321 and Lys-339. The active-site Proton acceptor is the His-351. 2 residues coordinate UDP-N-acetyl-alpha-D-glucosamine: Tyr-354 and Asn-365. Acetyl-CoA-binding positions include Ala-368, 374-375 (NY), Ser-393, Ala-411, and Arg-428.

This sequence in the N-terminal section; belongs to the N-acetylglucosamine-1-phosphate uridyltransferase family. It in the C-terminal section; belongs to the transferase hexapeptide repeat family. As to quaternary structure, homotrimer. Mg(2+) is required as a cofactor.

It localises to the cytoplasm. The enzyme catalyses alpha-D-glucosamine 1-phosphate + acetyl-CoA = N-acetyl-alpha-D-glucosamine 1-phosphate + CoA + H(+). It carries out the reaction N-acetyl-alpha-D-glucosamine 1-phosphate + UTP + H(+) = UDP-N-acetyl-alpha-D-glucosamine + diphosphate. Its pathway is nucleotide-sugar biosynthesis; UDP-N-acetyl-alpha-D-glucosamine biosynthesis; N-acetyl-alpha-D-glucosamine 1-phosphate from alpha-D-glucosamine 6-phosphate (route II): step 2/2. It participates in nucleotide-sugar biosynthesis; UDP-N-acetyl-alpha-D-glucosamine biosynthesis; UDP-N-acetyl-alpha-D-glucosamine from N-acetyl-alpha-D-glucosamine 1-phosphate: step 1/1. The protein operates within bacterial outer membrane biogenesis; LPS lipid A biosynthesis. Its function is as follows. Catalyzes the last two sequential reactions in the de novo biosynthetic pathway for UDP-N-acetylglucosamine (UDP-GlcNAc). The C-terminal domain catalyzes the transfer of acetyl group from acetyl coenzyme A to glucosamine-1-phosphate (GlcN-1-P) to produce N-acetylglucosamine-1-phosphate (GlcNAc-1-P), which is converted into UDP-GlcNAc by the transfer of uridine 5-monophosphate (from uridine 5-triphosphate), a reaction catalyzed by the N-terminal domain. The sequence is that of Bifunctional protein GlmU from Fervidobacterium nodosum (strain ATCC 35602 / DSM 5306 / Rt17-B1).